Here is a 420-residue protein sequence, read N- to C-terminus: Protein translocase subunit SecF (420 aa).

6 consecutive transmembrane segments (helical) span residues Phe7–Leu27, Leu250–Val270, Trp276–Phe296, Ile309–Phe327, Val358–Gly378, and Val388–Ile408.

Belongs to the SecD/SecF family. SecF subfamily. Forms a complex with SecD. Part of the essential Sec protein translocation apparatus which comprises SecA, SecYEG and auxiliary proteins SecDF. Other proteins may also be involved.

It is found in the cell inner membrane. Its function is as follows. Part of the Sec protein translocase complex. Interacts with the SecYEG preprotein conducting channel. SecDF uses the proton motive force (PMF) to complete protein translocation after the ATP-dependent function of SecA. The sequence is that of Protein translocase subunit SecF from Treponema pallidum (strain Nichols).